The primary structure comprises 268 residues: Movement protein (268 aa).

The interval 218–246 (SDVRKGKISSSDRSAPNKNYRNVKDFGGM) is disordered. Residues 225-237 (ISSSDRSAPNKNY) are compositionally biased toward polar residues.

The protein belongs to the tobamovirus movement protein family. As to quaternary structure, binds to host RBCS at the plasmodesmata; this interaction seems required for viral systemic movement. In resistant plants, interacts with host MBP2C at host microtubules; this interaction prevents virus cell to cell movement. In resistant plants, interacts with host resistance (R) protein (e.g. tomato ToMV resistance protein TM-2(2), AC Q71BG9) at the host plasma membrane; this interaction triggers host defense responses leading to programmed cell death.

It localises to the host cytoplasm. The protein localises to the host cytoskeleton. Its subcellular location is the host cell junction. The protein resides in the host plasmodesma. Its function is as follows. Transports viral genome to neighboring plant cells directly through plasmosdesmata, without any budding. The movement protein allows efficient cell to cell propagation, by bypassing the host cell wall barrier. Forms a ribonucleoprotein complex with viral RNA. Binds microtubules and modulates microtubule stability. Can bind double-stranded DNA. Triggers host hypersensitive defense reaction in incompatible plants harboring resistance (R) proteins. This Nicotiana tabacum (Common tobacco) protein is Movement protein (MP).